We begin with the raw amino-acid sequence, 80 residues long: ATP synthase F(1) complex subunit delta, mitochondrial (80 aa).

Residues 1–22 (MLPATLLRXSGLGRVVRQARAY) constitute a mitochondrion transit peptide.

This sequence belongs to the ATPase epsilon chain family. Component of the ATP synthase complex composed at least of ATP5F1A/subunit alpha, ATP5F1B/subunit beta, ATP5MC1/subunit c (homooctomer), MT-ATP6/subunit a, MT-ATP8/subunit 8, ATP5ME/subunit e, ATP5MF/subunit f, ATP5MG/subunit g, ATP5MK/subunit k, ATP5MJ/subunit j, ATP5F1C/subunit gamma, ATP5F1D/subunit delta, ATP5F1E/subunit epsilon, ATP5PF/subunit F6, ATP5PB/subunit b, ATP5PD/subunit d, ATP5PO/subunit OSCP. ATP synthase complex consists of a soluble F(1) head domain (subunits alpha(3) and beta(3)) - the catalytic core - and a membrane F(0) domain - the membrane proton channel (subunits c, a, 8, e, f, g, k and j). These two domains are linked by a central stalk (subunits gamma, delta, and epsilon) rotating inside the F1 region and a stationary peripheral stalk (subunits F6, b, d, and OSCP). Component of a complex composed at least by ATPIF1, ATP5F1A, ATP5F1B, ATP5F1C AND ATP5F1E.

It is found in the mitochondrion. It localises to the mitochondrion inner membrane. Functionally, subunit delta, of the mitochondrial membrane ATP synthase complex (F(1)F(0) ATP synthase or Complex V) that produces ATP from ADP in the presence of a proton gradient across the membrane which is generated by electron transport complexes of the respiratory chain. ATP synthase complex consist of a soluble F(1) head domain - the catalytic core - and a membrane F(1) domain - the membrane proton channel. These two domains are linked by a central stalk rotating inside the F(1) region and a stationary peripheral stalk. During catalysis, ATP synthesis in the catalytic domain of F(1) is coupled via a rotary mechanism of the central stalk subunits to proton translocation. In vivo, can only synthesize ATP although its ATP hydrolase activity can be activated artificially in vitro. With the central stalk subunit gamma, is essential for the biogenesis of F(1) catalytic part of the ATP synthase complex namely in the formation of F1 assembly intermediate. This Sus scrofa (Pig) protein is ATP synthase F(1) complex subunit delta, mitochondrial.